The sequence spans 290 residues: Light-independent protochlorophyllide reductase iron-sulfur ATP-binding protein (290 aa).

ATP-binding positions include 34–39 and Lys-63; that span reads GIGKST. Ser-38 is a Mg(2+) binding site. [4Fe-4S] cluster contacts are provided by Cys-119 and Cys-153. Residues 204-205 and 228-230 contribute to the ATP site; these read NR and PDL.

It belongs to the NifH/BchL/ChlL family. In terms of assembly, homodimer. Protochlorophyllide reductase is composed of three subunits; BchL, BchN and BchB. [4Fe-4S] cluster is required as a cofactor.

It carries out the reaction chlorophyllide a + oxidized 2[4Fe-4S]-[ferredoxin] + 2 ADP + 2 phosphate = protochlorophyllide a + reduced 2[4Fe-4S]-[ferredoxin] + 2 ATP + 2 H2O. The protein operates within porphyrin-containing compound metabolism; bacteriochlorophyll biosynthesis (light-independent). Its function is as follows. Component of the dark-operative protochlorophyllide reductase (DPOR) that uses Mg-ATP and reduced ferredoxin to reduce ring D of protochlorophyllide (Pchlide) to form chlorophyllide a (Chlide). This reaction is light-independent. The L component serves as a unique electron donor to the NB-component of the complex, and binds Mg-ATP. In Rhodospirillum rubrum, this protein is Light-independent protochlorophyllide reductase iron-sulfur ATP-binding protein.